We begin with the raw amino-acid sequence, 150 residues long: 3-dehydroquinate dehydratase (150 aa).

Tyrosine 26 acts as the Proton acceptor in catalysis. 3 residues coordinate substrate: asparagine 77, histidine 83, and aspartate 90. Histidine 103 acts as the Proton donor in catalysis. Substrate contacts are provided by residues 104 to 105 (LS) and arginine 114.

It belongs to the type-II 3-dehydroquinase family. As to quaternary structure, homododecamer.

It catalyses the reaction 3-dehydroquinate = 3-dehydroshikimate + H2O. It functions in the pathway metabolic intermediate biosynthesis; chorismate biosynthesis; chorismate from D-erythrose 4-phosphate and phosphoenolpyruvate: step 3/7. In terms of biological role, catalyzes a trans-dehydration via an enolate intermediate. In Pseudoalteromonas translucida (strain TAC 125), this protein is 3-dehydroquinate dehydratase.